The primary structure comprises 271 residues: Small ribosomal subunit protein uS2 (271 aa).

It belongs to the universal ribosomal protein uS2 family.

The protein is Small ribosomal subunit protein uS2 of Wolbachia pipientis subsp. Culex pipiens (strain wPip).